The sequence spans 507 residues: Probable DNA ligase (507 aa).

ATP is bound at residue Glu209. Lys211 functions as the N6-AMP-lysine intermediate in the catalytic mechanism. 6 residues coordinate ATP: Arg216, Arg231, Glu260, Phe295, Arg366, and Lys372.

This sequence belongs to the ATP-dependent DNA ligase family. The cofactor is Mg(2+).

It carries out the reaction ATP + (deoxyribonucleotide)n-3'-hydroxyl + 5'-phospho-(deoxyribonucleotide)m = (deoxyribonucleotide)n+m + AMP + diphosphate.. Its function is as follows. DNA ligase that seals nicks in double-stranded DNA during DNA replication, DNA recombination and DNA repair. In Pseudarthrobacter chlorophenolicus (strain ATCC 700700 / DSM 12829 / CIP 107037 / JCM 12360 / KCTC 9906 / NCIMB 13794 / A6) (Arthrobacter chlorophenolicus), this protein is Probable DNA ligase.